Consider the following 447-residue polypeptide: Tektin-4 (447 aa).

Coiled coils occupy residues 114–143 (KSEL…RALD), 324–348 (KILS…DKEA), and 375–423 (FRLM…TNSL).

This sequence belongs to the tektin family. As to quaternary structure, microtubule inner protein component of sperm flagellar doublet microtubules. Post-translationally, ubiquitinated, leading to its degradation. Deubiquitinated by USP16, promoting its stability.

It is found in the cytoplasm. Its subcellular location is the cytoskeleton. The protein resides in the cilium axoneme. It localises to the flagellum axoneme. Microtubule inner protein (MIP) part of the dynein-decorated doublet microtubules (DMTs) in cilia and flagellar axoneme. Forms filamentous polymers in the walls of ciliary and flagellar microtubules. Contributes to normal sperm motility. The protein is Tektin-4 (Tekt4) of Rattus norvegicus (Rat).